Reading from the N-terminus, the 421-residue chain is Elsinochrome C biosynthesis regulatory protein elcR (421 aa).

Residues 1–16 (MATQLPSPTATTSHSG) show a composition bias toward polar residues. A disordered region spans residues 1-20 (MATQLPSPTATTSHSGNEPR). The segment at residues 27–54 (CNNCSAQKIRCGKQRPACARCVNKKLQC) is a DNA-binding region (zn(2)-C6 fungal-type).

The protein resides in the nucleus. Functionally, transcription regulator of the gene cluster that mediates the biosynthesis of elsinochrome C, a perelyenequinone phytotoxin structurally similar to cercosporin. The polypeptide is Elsinochrome C biosynthesis regulatory protein elcR (Phaeosphaeria nodorum (strain SN15 / ATCC MYA-4574 / FGSC 10173) (Glume blotch fungus)).